We begin with the raw amino-acid sequence, 87 residues long: Small ribosomal subunit protein uS17 (87 aa).

The protein belongs to the universal ribosomal protein uS17 family. Part of the 30S ribosomal subunit.

Its function is as follows. One of the primary rRNA binding proteins, it binds specifically to the 5'-end of 16S ribosomal RNA. The sequence is that of Small ribosomal subunit protein uS17 from Dichelobacter nodosus (strain VCS1703A).